The primary structure comprises 202 residues: NADH-quinone oxidoreductase subunit C (202 aa).

Belongs to the complex I 30 kDa subunit family. As to quaternary structure, NDH-1 is composed of 14 different subunits. Subunits NuoB, C, D, E, F, and G constitute the peripheral sector of the complex.

It localises to the cell inner membrane. It catalyses the reaction a quinone + NADH + 5 H(+)(in) = a quinol + NAD(+) + 4 H(+)(out). In terms of biological role, NDH-1 shuttles electrons from NADH, via FMN and iron-sulfur (Fe-S) centers, to quinones in the respiratory chain. The immediate electron acceptor for the enzyme in this species is believed to be ubiquinone. Couples the redox reaction to proton translocation (for every two electrons transferred, four hydrogen ions are translocated across the cytoplasmic membrane), and thus conserves the redox energy in a proton gradient. The protein is NADH-quinone oxidoreductase subunit C of Albidiferax ferrireducens (strain ATCC BAA-621 / DSM 15236 / T118) (Rhodoferax ferrireducens).